Consider the following 435-residue polypeptide: Maltodextrin transport system permease protein MalC (435 aa).

The next 10 helical transmembrane spans lie at 34–54 (GFIFLGVTIVFVLYFLALATP), 73–93 (FMLIRGAFHLIFVIVYVLFYF), 130–150 (YLLIIPSYVAMTFAIIFPVIV), 199–219 (IIWALAASTLQIVIGIFTAII), 230–250 (IFGVIFLLPWAVPAFITILTF), 263–283 (TQVLPILAKFLPFLDGALIPW), 294–314 (LIMMQGWLGFPYIYVLTLGIL), 338–358 (NITFPMILAVAAPTLISQYTF), 371–391 (GGGPGSVGGGAGSTDILISWI), and 404–424 (MAAAVTLIISIIVISISMIAF). Residues 195–423 (LSWTIIWALA…IIVISISMIA (229 aa)) form the ABC transmembrane type-1 domain.

It belongs to the binding-protein-dependent transport system permease family. MalFG subfamily.

Its subcellular location is the cell membrane. Its function is as follows. Part of the binding-protein-dependent transport system for maltodextrin; probably responsible for the translocation of the substrate across the membrane. This chain is Maltodextrin transport system permease protein MalC (malC), found in Streptococcus pneumoniae serotype 4 (strain ATCC BAA-334 / TIGR4).